We begin with the raw amino-acid sequence, 708 residues long: Polyribonucleotide nucleotidyltransferase (708 aa).

Mg(2+) is bound by residues D487 and D493. Residues 554-613 (PRIHTMKISADKIKDVIGKGGAVIRALTEETGTTIEIEDDGTIKIAATEGAAAKEAIRRI) enclose the KH domain. An S1 motif domain is found at 623–691 (GVIYTGKVAR…RQGRVRLSMK (69 aa)).

It belongs to the polyribonucleotide nucleotidyltransferase family. As to quaternary structure, component of the RNA degradosome, which is a multiprotein complex involved in RNA processing and mRNA degradation. Mg(2+) serves as cofactor.

It localises to the cytoplasm. It carries out the reaction RNA(n+1) + phosphate = RNA(n) + a ribonucleoside 5'-diphosphate. Involved in mRNA degradation. Catalyzes the phosphorolysis of single-stranded polyribonucleotides processively in the 3'- to 5'-direction. This is Polyribonucleotide nucleotidyltransferase from Vibrio vulnificus (strain CMCP6).